The primary structure comprises 381 residues: Probable serine/threonine-protein kinase PBL25 (381 aa).

Cysteine 3 carries S-palmitoyl cysteine lipidation. A disordered region spans residues 16-41; that stretch reads GSSMPAPYKQPNSPKRTTGEVVAKNA. A Phosphothreonine modification is found at threonine 54. Residues 65–342 enclose the Protein kinase domain; that stretch reads FRQECLIGEG…SDVITALSFL (278 aa). ATP-binding positions include 71 to 79 and lysine 94; that span reads IGEGGFGRV. Position 139 is a phosphotyrosine (tyrosine 139). Residue aspartate 192 is the Proton acceptor of the active site. Phosphoserine occurs at positions 196 and 226. At threonine 232 the chain carries Phosphothreonine. Tyrosine 240 bears the Phosphotyrosine mark. Residues 347-381 form a disordered region; sequence NSSNTGSNHLQQNRSNKYQDAVQWDSSPRYANSQM. The segment covering 355–381 has biased composition (polar residues); that stretch reads HLQQNRSNKYQDAVQWDSSPRYANSQM.

The protein belongs to the protein kinase superfamily. Ser/Thr protein kinase family.

The protein localises to the cell membrane. It catalyses the reaction L-seryl-[protein] + ATP = O-phospho-L-seryl-[protein] + ADP + H(+). The catalysed reaction is L-threonyl-[protein] + ATP = O-phospho-L-threonyl-[protein] + ADP + H(+). Its function is as follows. May be involved in plant defense signaling. The protein is Probable serine/threonine-protein kinase PBL25 of Arabidopsis thaliana (Mouse-ear cress).